Consider the following 167-residue polypeptide: Ribosome maturation factor RimP (167 aa).

The protein belongs to the RimP family.

Its subcellular location is the cytoplasm. Its function is as follows. Required for maturation of 30S ribosomal subunits. In Streptomyces griseus subsp. griseus (strain JCM 4626 / CBS 651.72 / NBRC 13350 / KCC S-0626 / ISP 5235), this protein is Ribosome maturation factor RimP.